Consider the following 310-residue polypeptide: Syntaxin-81 (310 aa).

At Met1–Arg289 the chain is on the cytoplasmic side. Positions Arg77–Asn114 form a coiled coil. The chain crosses the membrane as a helical; Anchor for type IV membrane protein span at residues Thr290–Ser310.

The protein belongs to the syntaxin family. Part of the t-SNARE complex. Interacts with MAG2.

It is found in the membrane. Its function is as follows. Vesicle trafficking protein that functions in the secretory pathway. This is Syntaxin-81 (SYP81) from Arabidopsis thaliana (Mouse-ear cress).